The following is a 255-amino-acid chain: MKKWLLLLVAACITFALTACGSSNSGSESGKKKLIMGTSADYKPFEYKEGDNIVGFDVELAKALAKKAGYEIEVQDMDFNSLITALKSKQVDLVLSGMTPTPERKKQVDFSDVYYTANHMIVSKKDSGIQSLKDLKGKTVGVQLGSIQEEKGKELSPEYGFKTEDRNRISDLVQEIKSDRFDAAIIEDIVAEGYFKSNDDLQGFVIPDAKAEEAGSAIAFRKDSELTDKFNKALKEMEDNGELEKLKKKWFTGEK.

The N-terminal stretch at 1–19 is a signal peptide; the sequence is MKKWLLLLVAACITFALTA. The N-palmitoyl cysteine moiety is linked to residue C20. The S-diacylglycerol cysteine moiety is linked to residue C20.

It belongs to the bacterial solute-binding protein 3 family.

The protein localises to the cell membrane. In terms of biological role, part of a binding-protein-dependent transport system for arginine. In Bacillus subtilis (strain 168), this protein is Arginine-binding extracellular protein ArtP (artP).